The following is a 218-amino-acid chain: PKHD-type hydroxylase IL0759 (218 aa).

Residues 76–170 (QVARVTINRY…RLAMIGWVQS (95 aa)) enclose the Fe2OG dioxygenase domain. 3 residues coordinate Fe cation: H94, D96, and H151. A 2-oxoglutarate-binding site is contributed by R161.

Requires Fe(2+) as cofactor. L-ascorbate serves as cofactor.

The protein is PKHD-type hydroxylase IL0759 of Idiomarina loihiensis (strain ATCC BAA-735 / DSM 15497 / L2-TR).